A 274-amino-acid polypeptide reads, in one-letter code: Bis(5'-nucleosyl)-tetraphosphatase, symmetrical (274 aa).

The protein belongs to the Ap4A hydrolase family.

It catalyses the reaction P(1),P(4)-bis(5'-adenosyl) tetraphosphate + H2O = 2 ADP + 2 H(+). Functionally, hydrolyzes diadenosine 5',5'''-P1,P4-tetraphosphate to yield ADP. This Shewanella sp. (strain ANA-3) protein is Bis(5'-nucleosyl)-tetraphosphatase, symmetrical.